The sequence spans 147 residues: Small ribosomal subunit protein bS16 (147 aa).

A disordered region spans residues 81 to 147; the sequence is QKFTGDTSPS…GDNSGEKAEA (67 aa). 2 stretches are compositionally biased toward basic and acidic residues: residues 95-104 and 114-125; these read QPERPNKDDL and EAPREAITKKSE. Positions 126 to 140 are enriched in low complexity; the sequence is GAAADEASESAAGDN.

It belongs to the bacterial ribosomal protein bS16 family.

This Cutibacterium acnes (strain DSM 16379 / KPA171202) (Propionibacterium acnes) protein is Small ribosomal subunit protein bS16.